The following is a 370-amino-acid chain: Protein rough sheath 2 (370 aa).

2 consecutive HTH myb-type domains span residues 1–53 (MKER…KNYL) and 54–108 (RPGI…EKQQ). 2 DNA-binding regions (H-T-H motif) span residues 27–53 (WHLVSQRMNVALDRDAKSCLERWKNYL) and 81–104 (WKKIAAEVPGRTAKRLGKWWEVFK). Positions 107-129 (QQRELRDSRRPPPEPSPDERGRY) are disordered. A coiled-coil region spans residues 276–340 (KRVEQQLEME…QVKEEKMAEQ (65 aa)).

In terms of assembly, homodimer. Interacts with AS2, WRKY1, HIRA, a probable histone chaperone, and RIK, a predicted RNA binding protein. Expressed in lateral organ promordia.

The protein resides in the nucleus. Functionally, transcription factor required for normal cell differentiation. Interacts directly with asymmetric leaves 2 (AS2) to repress the knox homeobox genes. The protein is Protein rough sheath 2 (RS2) of Zea mays (Maize).